We begin with the raw amino-acid sequence, 131 residues long: Superoxide dismutase [Ni] (131 aa).

The propeptide occupies 1-14; it reads MLSRLFAPKVTVSA. Residues His-15, Cys-16, and Cys-20 each contribute to the Ni(2+) site.

It belongs to the nickel superoxide dismutase family. As to quaternary structure, homohexamer. The hexameric protein has a roughly the shape of a hollow sphere with an outer diameter of 60 angstroms and a large interior cavity. Ni(2+) serves as cofactor.

It localises to the cytoplasm. It catalyses the reaction 2 superoxide + 2 H(+) = H2O2 + O2. The chain is Superoxide dismutase [Ni] (sodN) from Streptomyces coelicolor (strain ATCC BAA-471 / A3(2) / M145).